The following is a 612-amino-acid chain: U-box domain-containing protein 11 (612 aa).

Positions 127 to 196 (DEVGEQVELA…LHFGEEEEKQ (70 aa)) form a coiled coil. The 75-residue stretch at 240–314 (TIPVDFLCPV…SRWCAEHNIE (75 aa)) folds into the U-box domain. 5 ARM repeats span residues 363-402 (TDNR…NLSI), 404-443 (ENNK…SLSL), 445-484 (DENK…NLCI), 486-526 (HGNK…VLAN), and 528-567 (QDAK…SLCK).

It carries out the reaction S-ubiquitinyl-[E2 ubiquitin-conjugating enzyme]-L-cysteine + [acceptor protein]-L-lysine = [E2 ubiquitin-conjugating enzyme]-L-cysteine + N(6)-ubiquitinyl-[acceptor protein]-L-lysine.. It participates in protein modification; protein ubiquitination. Functionally, functions as an E3 ubiquitin ligase. This chain is U-box domain-containing protein 11 (PUB11), found in Arabidopsis thaliana (Mouse-ear cress).